A 196-amino-acid polypeptide reads, in one-letter code: Heat shock protein beta-8 (196 aa).

Positions 1–34 (MADGQMPFPCHYTSRRRRDPFRDSPLSSRLLDDG) are disordered. The span at 23–34 (DSPLSSRLLDDG) shows a compositional bias: low complexity. Ser-24 and Ser-57 each carry phosphoserine. Thr-63 is modified (phosphothreonine). An asymmetric dimethylarginine mark is found at Arg-71 and Arg-78. One can recognise a sHSP domain in the interval 74–185 (TAMTRFGVPA…PFGESSFNNE (112 aa)). Residue Ser-87 is modified to Phosphoserine. A disordered region spans residues 176 to 196 (PFGESSFNNELPQDGQEVTCT). Over residues 178-196 (GESSFNNELPQDGQEVTCT) the composition is skewed to polar residues.

It belongs to the small heat shock protein (HSP20) family. In terms of assembly, monomer. Forms a ternary complex with BAG3 and HSPA1A. Component of the chaperone-assisted selective autophagy (CASA) complex consisting of BAG3, HSPA8/HSC70, HSPB8 and STUB1/CHIP. Interacts with HSPB1. Interacts with DNAJB6. Interacts with BAG3. Phosphorylated.

The protein resides in the cytoplasm. It localises to the nucleus. Involved in the chaperone-assisted selective autophagy (CASA), a crucial process for protein quality control, particularly in mechanical strained cells and tissues such as muscle. Displays temperature-dependent chaperone activity. The polypeptide is Heat shock protein beta-8 (HSPB8) (Bos taurus (Bovine)).